A 161-amino-acid polypeptide reads, in one-letter code: Vitamin K epoxide reductase complex subunit 1 (161 aa).

At 1 to 9 (MGTTWRSPG) the chain is on the cytoplasmic side. The helical transmembrane segment at 10-29 (LVRLALCLAGLALSLYALHV) threads the bilayer. At 30–80 (KAARARDENYRALCDVGTAISCSRVFSSRWGRGFGLVEHMLGADSVLNQSN) the chain is on the lumenal side. The cysteines at positions 43 and 51 are disulfide-linked. Asn80 is a (S)-warfarin binding site. A helical membrane pass occupies residues 81–95 (SIFGCLFYTLQLLLG). At 96–100 (CLRGR) the chain is on the cytoplasmic side. The helical transmembrane segment at 101-128 (WASILLVLSSLVSVAGSVYLAWILFFVL) threads the bilayer. Residues 129 to 131 (YDF) are Lumenal-facing. Cysteines 132 and 135 form a disulfide. Residues 132 to 153 (CIVCITTYAINVGLMLLSFQKV) form a helical membrane-spanning segment. The phylloquinone site is built by Cys135 and Tyr139. Tyr139 provides a ligand contact to (S)-warfarin. Topologically, residues 154–161 (PEHKTKKH) are cytoplasmic.

Belongs to the VKOR family. Detected in liver.

It localises to the endoplasmic reticulum membrane. The enzyme catalyses phylloquinone + [protein]-disulfide + H2O = 2,3-epoxyphylloquinone + [protein]-dithiol. It catalyses the reaction phylloquinol + [protein]-disulfide = phylloquinone + [protein]-dithiol. Inhibited by warfarin (coumadin). Warfarin locks VKORC1 in both redox states into the closed conformation. Involved in vitamin K metabolism. Catalytic subunit of the vitamin K epoxide reductase (VKOR) complex which reduces inactive vitamin K 2,3-epoxide to active vitamin K. Vitamin K is required for the gamma-carboxylation of various proteins, including clotting factors, and is required for normal blood coagulation, but also for normal bone development. This Mus musculus (Mouse) protein is Vitamin K epoxide reductase complex subunit 1 (Vkorc1).